Here is a 404-residue protein sequence, read N- to C-terminus: MRNINVQLNPLSDIEKLQVELVERKGLGHPDYIADAVAEEASRKLSLYYLKKYGVILHHNLDKTLVVGGQATPRFKGGDIIQPIYIIVAGRATTEVKTESGIDQIPVGTIIIESVKEWIRNNFRYLDAERHVIVDYKIGKGSSDLVGIFEASKRVPLSNDTSFGVGFAPLTKLEKLVYETERHLNSKQFKAKLPEVGEDIKVMGLRRGNEVDLTIAMATISELIEDVNHYINVKEQVRNQILDLASKIAPGYNVRVYVNTGDKIDKNILYLTVTGTSAEHGDDGMTGRGNRGVGLITPMRPMSLEATAGKNPVNHVGKLYNVLANLIANKIAQEVKDVKFSQVQVLGQIGRPIDDPLIANVDVITYDGKLTDETKNEISGIVDEMLSSFNKLTELILEGKATLF.

139–144 (GKGSSD) serves as a coordination point for ATP.

This sequence belongs to the AdoMet synthase 2 family. Mg(2+) is required as a cofactor.

The enzyme catalyses L-methionine + ATP + H2O = S-adenosyl-L-methionine + phosphate + diphosphate. It participates in amino-acid biosynthesis; S-adenosyl-L-methionine biosynthesis; S-adenosyl-L-methionine from L-methionine: step 1/1. Catalyzes the formation of S-adenosylmethionine from methionine and ATP. The sequence is that of S-adenosylmethionine synthase from Saccharolobus solfataricus (strain ATCC 35092 / DSM 1617 / JCM 11322 / P2) (Sulfolobus solfataricus).